The chain runs to 156 residues: Crossover junction endodeoxyribonuclease RuvC (156 aa).

Residues Asp-7, Glu-66, and Asp-138 contribute to the active site. Asp-7, Glu-66, and Asp-138 together coordinate Mg(2+).

This sequence belongs to the RuvC family. Homodimer which binds Holliday junction (HJ) DNA. The HJ becomes 2-fold symmetrical on binding to RuvC with unstacked arms; it has a different conformation from HJ DNA in complex with RuvA. In the full resolvosome a probable DNA-RuvA(4)-RuvB(12)-RuvC(2) complex forms which resolves the HJ. Requires Mg(2+) as cofactor.

Its subcellular location is the cytoplasm. It carries out the reaction Endonucleolytic cleavage at a junction such as a reciprocal single-stranded crossover between two homologous DNA duplexes (Holliday junction).. In terms of biological role, the RuvA-RuvB-RuvC complex processes Holliday junction (HJ) DNA during genetic recombination and DNA repair. Endonuclease that resolves HJ intermediates. Cleaves cruciform DNA by making single-stranded nicks across the HJ at symmetrical positions within the homologous arms, yielding a 5'-phosphate and a 3'-hydroxyl group; requires a central core of homology in the junction. The consensus cleavage sequence is 5'-(A/T)TT(C/G)-3'. Cleavage occurs on the 3'-side of the TT dinucleotide at the point of strand exchange. HJ branch migration catalyzed by RuvA-RuvB allows RuvC to scan DNA until it finds its consensus sequence, where it cleaves and resolves the cruciform DNA. In Ehrlichia canis (strain Jake), this protein is Crossover junction endodeoxyribonuclease RuvC.